A 424-amino-acid chain; its full sequence is Lactate racemase (424 aa).

72 to 75 (DHTR) serves as a coordination point for Ni(II)-pyridinium-3,5-bisthiocarboxylate mononucleotide. Residues histidine 108 and histidine 174 each act as proton donor/acceptor in the active site. Positions 184 and 200 each coordinate Ni(II)-pyridinium-3,5-bisthiocarboxylate mononucleotide. Substrate is bound by residues glutamine 295 and lysine 298.

It belongs to the lactate racemase family. Homodimer. The cofactor is Ni(II)-pyridinium-3,5-bisthiocarboxylate mononucleotide.

The catalysed reaction is (S)-lactate = (R)-lactate. With respect to regulation, activation of the apo-enzyme requires the three accessory proteins LarB, LarE and LarC, that are involved in the biosynthesis of the nickel-pincer cofactor of LarA. Inhibited by sulfite that behaves as a mixed inhibitor. Functionally, catalyzes the interconversion between the D- and L-isomers of lactate. May act as a rescue enzyme to ensure D-lactate production in physiological conditions where its production by the D-lactate dehydrogenase LdhD is not sufficient. D-Lactate is absolutely required for growth of L.plantarum and is an essential component of the cell wall peptidoglycan in this species, where it is incorporated as the last residue of the muramoyl-pentadepsipeptide peptidoglycan precursor; its incorporation confers high level of vancomycin resistance. The polypeptide is Lactate racemase (Lactiplantibacillus plantarum (strain ATCC BAA-793 / NCIMB 8826 / WCFS1) (Lactobacillus plantarum)).